The sequence spans 362 residues: Flotillin-like protein FloA 2 (362 aa).

Residues 24–44 (TALLIGALVIFAGIVVVLFIF) form a helical membrane-spanning segment.

It belongs to the flotillin-like FloA family. Homooligomerizes.

It is found in the cell membrane. The protein localises to the membrane raft. Found in functional membrane microdomains (FMM) that may be equivalent to eukaryotic membrane rafts. FMMs are highly dynamic and increase in number as cells age. Flotillins are thought to be important factors in membrane fluidity. This chain is Flotillin-like protein FloA 2, found in Rhodopirellula baltica (strain DSM 10527 / NCIMB 13988 / SH1).